The chain runs to 366 residues: MSIIIPVKLPHTSYNIAIAPGSLSQLGSHLEPLKLGQKILIISNPEIFNYYGDVVVNSLKKSGFEVFTHLIPAGEAYKTLDSIAQVYDTALEHRLERSSTMIALGGGVIGDMTGFAAATWLRGINFVQVPTSLLAMVDASIGGKTGVNHPQGKNLIGAFYQPRLVFIDPSVLKTLPVREFRAGMAEVIKYGIIWDKALFEQLEQAKTLDHLNSLNDELLQTIITRSCQAKVDVVSQDEKESGLRAILNYGHTIGHAIESLTGYETINHGEAVAMGMVAAGKIAIKLSLWTQEETIRQDQLIDKVGLISTIPKTLDIDQVIESLQSDKKVKSGKVRFILPTSIGKVIISDQVSSEIIKSVMIHQVNK.

Residues 107 to 111 (GVIGD), 131 to 132 (TS), lysine 144, and lysine 153 contribute to the NAD(+) site. Zn(2+)-binding residues include glutamate 186, histidine 251, and histidine 268.

It belongs to the sugar phosphate cyclases superfamily. Dehydroquinate synthase family. The cofactor is Co(2+). Requires Zn(2+) as cofactor. NAD(+) serves as cofactor.

The protein localises to the cytoplasm. It catalyses the reaction 7-phospho-2-dehydro-3-deoxy-D-arabino-heptonate = 3-dehydroquinate + phosphate. It participates in metabolic intermediate biosynthesis; chorismate biosynthesis; chorismate from D-erythrose 4-phosphate and phosphoenolpyruvate: step 2/7. Catalyzes the conversion of 3-deoxy-D-arabino-heptulosonate 7-phosphate (DAHP) to dehydroquinate (DHQ). In Rippkaea orientalis (strain PCC 8801 / RF-1) (Cyanothece sp. (strain PCC 8801)), this protein is 3-dehydroquinate synthase.